A 235-amino-acid chain; its full sequence is RING-H2 finger protein ATL33 (235 aa).

Residues 64–84 traverse the membrane as a helical segment; it reads LIFVVIAFVAVPALVYALFFN. A disordered region spans residues 87-133; sequence CSSSRRNSSSSRTSSSSDDTPHATVDTPPITETTVTSESGGKFHKDT. Residues 88–103 show a composition bias toward low complexity; that stretch reads SSSRRNSSSSRTSSSS. Positions 116-125 are enriched in polar residues; sequence ITETTVTSES. Residues 142 to 184 form an RING-type; atypical zinc finger; sequence CSVCLMVFTDSDELRQLSECKHAFHVLCIETWLKDHPNCPICR. A compositionally biased stretch (low complexity) spans 201-216; the sequence is NVNGNVNRSGGNRRVS. The tract at residues 201 to 235 is disordered; that stretch reads NVNGNVNRSGGNRRVSATSRDDDWRQGLPDASSLV.

Belongs to the RING-type zinc finger family. ATL subfamily.

It localises to the membrane. It catalyses the reaction S-ubiquitinyl-[E2 ubiquitin-conjugating enzyme]-L-cysteine + [acceptor protein]-L-lysine = [E2 ubiquitin-conjugating enzyme]-L-cysteine + N(6)-ubiquitinyl-[acceptor protein]-L-lysine.. Its pathway is protein modification; protein ubiquitination. This chain is RING-H2 finger protein ATL33 (ATL33), found in Arabidopsis thaliana (Mouse-ear cress).